The sequence spans 113 residues: Photosystem II reaction center Psb28 protein (113 aa).

The protein belongs to the Psb28 family. In terms of assembly, part of the photosystem II complex.

The protein resides in the cellular thylakoid membrane. The protein is Photosystem II reaction center Psb28 protein of Prochlorococcus marinus (strain NATL2A).